Here is a 1408-residue protein sequence, read N- to C-terminus: DNA-directed RNA polymerase subunit beta' (1408 aa).

Zn(2+)-binding residues include cysteine 70, cysteine 72, cysteine 85, and cysteine 88. 3 residues coordinate Mg(2+): aspartate 460, aspartate 462, and aspartate 464. The Zn(2+) site is built by cysteine 814, cysteine 888, cysteine 895, and cysteine 898.

This sequence belongs to the RNA polymerase beta' chain family. As to quaternary structure, the RNAP catalytic core consists of 2 alpha, 1 beta, 1 beta' and 1 omega subunit. When a sigma factor is associated with the core the holoenzyme is formed, which can initiate transcription. Mg(2+) is required as a cofactor. The cofactor is Zn(2+).

It carries out the reaction RNA(n) + a ribonucleoside 5'-triphosphate = RNA(n+1) + diphosphate. Functionally, DNA-dependent RNA polymerase catalyzes the transcription of DNA into RNA using the four ribonucleoside triphosphates as substrates. The chain is DNA-directed RNA polymerase subunit beta' from Shewanella frigidimarina (strain NCIMB 400).